A 193-amino-acid chain; its full sequence is Probable oligoribonuclease (193 aa).

Residues 15–177 form the Exonuclease domain; that stretch reads IIWIDCEMTG…DDIMESIAEL (163 aa). Y136 is an active-site residue.

Belongs to the oligoribonuclease family.

Functionally, 3'-to-5' exoribonuclease specific for small oligoribonucleotides. This chain is Probable oligoribonuclease, found in Caenorhabditis elegans.